Here is a 159-residue protein sequence, read N- to C-terminus: Protransforming growth factor alpha (159 aa).

The first 23 residues, 1-23 (MVPAAGQLALLALGILVAVCQAL), serve as a signal peptide directing secretion. Residues 24–38 (ENSTSPLSDSPVAAA) constitute a propeptide, removed in mature form. The Extracellular portion of the chain corresponds to 24 to 97 (ENSTSPLSDS…AVVAASQKKQ (74 aa)). Asn25 is a glycosylation site (N-linked (GlcNAc...) asparagine). An EGF-like domain is found at 42–82 (HFNKCPDSHTQYCFHGTCRFLVQEEKPACVCHSGYVGVRCE). Cystine bridges form between Cys46–Cys59, Cys54–Cys70, and Cys72–Cys81. Positions 89-159 (VVAASQKKQA…TACCHSETVV (71 aa)) are cleaved as a propeptide — removed in mature form. A helical membrane pass occupies residues 98-123 (AITALVVVSIVALAVLIITCVLIHCC). Residues 124 to 159 (QVRKHCEWCRALVCRHEKPSALLKGRTACCHSETVV) lie on the Cytoplasmic side of the membrane. 2 S-palmitoyl cysteine lipidation sites follow: Cys152 and Cys153.

Interacts with the PDZ domains of MAGI3, SDCBP and SNTA1. The interaction with SDCBP, is required for the targeting to the cell surface. In the endoplasmic reticulum, in its immature form (i.e. with a prosegment and lacking full N-glycosylation), interacts with CNIH. In the Golgi apparatus, may form a complex with CNIH and GORASP2. Interacts (via cytoplasmic C-terminal domain) with NKD2.

The protein resides in the secreted. It localises to the extracellular space. Its subcellular location is the cell membrane. In terms of biological role, TGF alpha is a mitogenic polypeptide that is able to bind to the EGF receptor/EGFR and to act synergistically with TGF beta to promote anchorage-independent cell proliferation in soft agar. The sequence is that of Protransforming growth factor alpha (Tgfa) from Rattus norvegicus (Rat).